The primary structure comprises 150 residues: Ribonuclease HI (150 aa).

Residues 1-141 (MKSINAYTDG…VDVLARGQAM (141 aa)) form the RNase H type-1 domain. Mg(2+) contacts are provided by D9, E47, D69, and D133.

This sequence belongs to the RNase H family. Monomer. Mg(2+) is required as a cofactor.

Its subcellular location is the cytoplasm. The enzyme catalyses Endonucleolytic cleavage to 5'-phosphomonoester.. Endonuclease that specifically degrades the RNA of RNA-DNA hybrids. This is Ribonuclease HI from Xylella fastidiosa (strain 9a5c).